A 309-amino-acid polypeptide reads, in one-letter code: Phytoene synthase (309 aa).

Belongs to the phytoene/squalene synthase family.

It catalyses the reaction 2 (2E,6E,10E)-geranylgeranyl diphosphate = 15-cis-phytoene + 2 diphosphate. It functions in the pathway carotenoid biosynthesis; phytoene biosynthesis; all-trans-phytoene from geranylgeranyl diphosphate: step 1/1. Its function is as follows. Catalyzes the reaction from prephytoene diphosphate to phytoene. The protein is Phytoene synthase (crtB) of Arthrospira platensis (Spirulina platensis).